The following is a 406-amino-acid chain: Exodeoxyribonuclease 7 large subunit (406 aa).

It belongs to the XseA family. Heterooligomer composed of large and small subunits.

The protein localises to the cytoplasm. It catalyses the reaction Exonucleolytic cleavage in either 5'- to 3'- or 3'- to 5'-direction to yield nucleoside 5'-phosphates.. Its function is as follows. Bidirectionally degrades single-stranded DNA into large acid-insoluble oligonucleotides, which are then degraded further into small acid-soluble oligonucleotides. This chain is Exodeoxyribonuclease 7 large subunit, found in Thermobifida fusca (strain YX).